An 833-amino-acid polypeptide reads, in one-letter code: Leucine--tRNA ligase (833 aa).

The 'HIGH' region signature appears at 41–52 (PYPSGAGLHVGH). Residues 610 to 614 (KMSKS) carry the 'KMSKS' region motif. Position 613 (Lys613) interacts with ATP.

This sequence belongs to the class-I aminoacyl-tRNA synthetase family.

The protein localises to the cytoplasm. The enzyme catalyses tRNA(Leu) + L-leucine + ATP = L-leucyl-tRNA(Leu) + AMP + diphosphate. This chain is Leucine--tRNA ligase, found in Streptococcus pneumoniae (strain Hungary19A-6).